The chain runs to 422 residues: Carboxypeptidase B2 (422 aa).

An N-terminal signal peptide occupies residues 1–21 (MKLYGLGVLVAIILYEKHGLA). The propeptide at 22 to 113 (FQSGHVLSAL…QTSNDTVSPR (92 aa)) is activation peptide. N43, N72, N84, and N107 each carry an N-linked (GlcNAc...) asparagine glycan. One can recognise a Peptidase M14 domain in the interval 121–418 (QYHSLNEIYS…AAVSKIAWHV (298 aa)). A disulfide bridge connects residues C177 and C190. Zn(2+)-binding residues include H180 and E183. Substrate is bound by residues 180 to 183 (HARE) and R238. A glycan (N-linked (GlcNAc...) asparagine) is linked at N240. Cystine bridges form between C249/C273 and C264/C278. Position 255-256 (255-256 (NR)) interacts with substrate. H309 contacts Zn(2+). 310–311 (SY) is a substrate binding site. N322 carries N-linked (GlcNAc...) asparagine glycosylation. Substrate is bound at residue Y362. Residue E384 is the Proton donor/acceptor of the active site.

The protein belongs to the peptidase M14 family. It depends on Zn(2+) as a cofactor. In terms of tissue distribution, plasma; synthesized in the liver.

The protein resides in the secreted. The catalysed reaction is Release of C-terminal Arg and Lys from a polypeptide.. With respect to regulation, TAFI/CPB2 is unique among carboxypeptidases in that it spontaneously inactivates with a short half-life, a property that is crucial for its role in controlling blood clot lysis. The zymogen is stabilized by interactions with the activation peptide. Release of the activation peptide increases a dynamic flap mobility and in time this leads to conformational changes that disrupt the catalytic site and expose a cryptic thrombin-cleavage site present at Arg-323. Cleaves C-terminal arginine or lysine residues from biologically active peptides such as kinins or anaphylatoxins in the circulation thereby regulating their activities. Down-regulates fibrinolysis by removing C-terminal lysine residues from fibrin that has already been partially degraded by plasmin. In Rattus norvegicus (Rat), this protein is Carboxypeptidase B2 (Cpb2).